The primary structure comprises 60 residues: Large ribosomal subunit protein bL32 (60 aa).

A compositionally biased stretch (basic residues) spans 1–16; the sequence is MAVPRRKTSPSRRGMR. Residues 1–60 are disordered; that stretch reads MAVPRRKTSPSRRGMRRSADAIKKPTYVEDKDSGELRRPHHLDLKTGMYKGRQVLKKKDA. A compositionally biased stretch (basic and acidic residues) spans 17–44; that stretch reads RSADAIKKPTYVEDKDSGELRRPHHLDL.

This sequence belongs to the bacterial ribosomal protein bL32 family.

This chain is Large ribosomal subunit protein bL32, found in Bradyrhizobium sp. (strain BTAi1 / ATCC BAA-1182).